Here is a 118-residue protein sequence, read N- to C-terminus: Large ribosomal subunit protein bL20 (118 aa).

The protein belongs to the bacterial ribosomal protein bL20 family.

Functionally, binds directly to 23S ribosomal RNA and is necessary for the in vitro assembly process of the 50S ribosomal subunit. It is not involved in the protein synthesizing functions of that subunit. This chain is Large ribosomal subunit protein bL20, found in Enterobacter sp. (strain 638).